Reading from the N-terminus, the 331-residue chain is Glycerophosphodiester phosphodiesterase 1 (331 aa).

Over 1–3 (MWL) the chain is Cytoplasmic. The chain crosses the membrane as a helical span at residues 4–24 (WEDQGGLLGPFSFVLVLLLVV). The Lumenal segment spans residues 25-248 (TRSPFNACVL…PRYSVFWKQS (224 aa)). The 267-residue stretch at 65 to 331 (VSAIAHRGGS…SMLEDCAPHF (267 aa)) folds into the GP-PDE domain. Mg(2+) is bound by residues E97 and D99. N168 carries an N-linked (GlcNAc...) asparagine glycan. D174 is a Mg(2+) binding site. Residues 249-269 (VFVVLDILLDWSMHNVLWYLC) form a helical membrane-spanning segment. The Cytoplasmic segment spans residues 270 to 331 (GISAFLMQKD…SMLEDCAPHF (62 aa)).

It belongs to the glycerophosphoryl diester phosphodiesterase family. As to quaternary structure, interacts with PRAF2. Interacts with RGS16. The cofactor is Mg(2+). Post-translationally, N-glycosylated. As to expression, widely expressed. Highly expressed in the brain and spinal cord, followed by kidney, liver, and testis. In contrast, little or no expression is detected in the heart or spleen.

The protein localises to the cell membrane. It localises to the cytoplasmic vesicle membrane. The enzyme catalyses sn-glycero-3-phospho-1D-myo-inositol + H2O = myo-inositol + sn-glycerol 3-phosphate + H(+). It catalyses the reaction 1-O-(1Z-octadecenyl)-sn-glycero-3-phospho-(N-5Z,8Z,11Z,14Z-eicosatetraenoyl)-ethanolamine + H2O = 1-O-(1Z-octadecenyl)-sn-glycero-3-phosphate + N-(5Z,8Z,11Z,14Z-eicosatetraenoyl)-ethanolamine + H(+). The catalysed reaction is 1-O-(1Z-octadecenyl)-sn-glycero-3-phospho-(N-9Z-octadecenoyl)-ethanolamine + H2O = 1-O-(1Z-octadecenyl)-sn-glycero-3-phosphate + N-(9Z-octadecenoyl) ethanolamine + H(+). It carries out the reaction 1-O-(1Z-octadecenyl)-sn-glycero-3-phospho-N-hexadecanoyl-ethanolamine + H2O = 1-O-(1Z-octadecenyl)-sn-glycero-3-phosphate + N-hexadecanoylethanolamine + H(+). The enzyme catalyses N-(4Z,7Z,10Z,13Z,16Z,19Z)-docosahexaenoyl-sn-glycero-3-phosphoethanolamine + H2O = N-(4Z,7Z,10Z,13Z,16Z,19Z)-docosahexaenoyl ethanolamine + sn-glycerol 3-phosphate + H(+). It catalyses the reaction N-eicosanoyl-sn-glycero-3-phosphoethanolamine + H2O = N-eicosanoyl ethanolamine + sn-glycerol 3-phosphate + H(+). The catalysed reaction is N-hexadecanoyl-sn-glycero-3-phosphoethanolamine + H2O = N-hexadecanoylethanolamine + sn-glycerol 3-phosphate + H(+). It carries out the reaction N-(9Z-octadecenoyl)-sn-glycero-3-phosphoethanolamine + H2O = N-(9Z-octadecenoyl) ethanolamine + sn-glycerol 3-phosphate + H(+). The enzyme catalyses N-(5Z,8Z,11Z,14Z-eicosatetraenoyl)-sn-glycero-3-phosphoethanolamine + H2O = N-(5Z,8Z,11Z,14Z-eicosatetraenoyl)-ethanolamine + sn-glycerol 3-phosphate + H(+). With respect to regulation, inhibited by EDTA, calcium chloride, and zinc chloride. Enhanced by magnesium chloride. Glycerophosphodiester phosphodiesterase activity can be modulated by G-protein signaling pathways. Its function is as follows. Hydrolyzes the phosphodiester bond of glycerophosphodiesters such as glycerophosphoinositol (GroPIns) and glycerophosphoethanolamine (GroPEth), to yield a glycerol phosphate and an alcohol. Hydrolyzes glycerophospho-N-acylethanolamines to N-acylethanolamines in the brain and participates in bioactive N-acylethanolamine biosynthesis such as anandamide (an endocannabinoid), N-palmitoylethanolamine (an anti-inflammatory), and N-oleoylethanolamine (an anorexic). In addition, has a lysophospholipase D activity by hydrolyzing N-acyl-lysoplasmenylethanolamine (N-acyl-lysoPlsEt) to N-acylethanolamine. However lysophospholipase D activity is lower than glycerophosphodiester phosphodiesterase activity. Has little or no activity towards glycerophosphocholine. This Mus musculus (Mouse) protein is Glycerophosphodiester phosphodiesterase 1.